Reading from the N-terminus, the 67-residue chain is DNA-directed RNA polymerases I, II, and III subunit RPABC5 (67 aa).

Zn(2+) contacts are provided by cysteine 7, cysteine 10, cysteine 44, and cysteine 45.

This sequence belongs to the archaeal Rpo10/eukaryotic RPB10 RNA polymerase subunit family. As to quaternary structure, component of the RNA polymerase I (Pol I), RNA polymerase II (Pol II) and RNA polymerase III (Pol III) complexes consisting of at least 13, 12 and 17 subunits, respectively.

The protein resides in the nucleus. DNA-dependent RNA polymerase catalyzes the transcription of DNA into RNA using the four ribonucleoside triphosphates as substrates. Common component of RNA polymerases I, II and III which synthesize ribosomal RNA precursors, mRNA precursors and many functional non-coding RNAs, and a small RNAs, such as 5S rRNA and tRNAs, respectively. Pol II is the central component of the basal RNA polymerase II transcription machinery. Pols are composed of mobile elements that move relative to each other. In Pol II, RBP10 is part of the core element with the central large cleft. The protein is DNA-directed RNA polymerases I, II, and III subunit RPABC5 of Caenorhabditis briggsae.